We begin with the raw amino-acid sequence, 129 residues long: Small ribosomal subunit protein uS8 (129 aa).

The protein belongs to the universal ribosomal protein uS8 family. In terms of assembly, part of the 30S ribosomal subunit. Contacts proteins S5 and S12.

Functionally, one of the primary rRNA binding proteins, it binds directly to 16S rRNA central domain where it helps coordinate assembly of the platform of the 30S subunit. This is Small ribosomal subunit protein uS8 from Mycoplasma capricolum subsp. capricolum (strain California kid / ATCC 27343 / NCTC 10154).